The sequence spans 151 residues: Large ribosomal subunit protein eL19 (151 aa).

Positions 62-93 (RLKERRKKRSLKSEGKKSGSRKGKKGARANSK) are disordered. Residues 79–88 (SGSRKGKKGA) show a composition bias toward basic residues.

Belongs to the eukaryotic ribosomal protein eL19 family. Part of the 50S ribosomal subunit.

In terms of biological role, binds to the 23S rRNA. The chain is Large ribosomal subunit protein eL19 from Saccharolobus solfataricus (strain ATCC 35092 / DSM 1617 / JCM 11322 / P2) (Sulfolobus solfataricus).